A 481-amino-acid chain; its full sequence is Dual specificity protein kinase CLK4 (481 aa).

Disordered stretches follow at residues 1–47 (MRHS…KPHH) and 102–143 (SKSS…EDDE). The span at 8–19 (HCPDWDSRESWG) shows a compositional bias: basic and acidic residues. 2 stretches are compositionally biased toward basic residues: residues 106-119 (VRSRRSSPKRKRNR) and 126-136 (SHSKSHRRKRS). 2 positions are modified to phosphoserine: serine 136 and serine 138. The Protein kinase domain occupies 159 to 475 (YEIVDTLGEG…LDEALQHPFF (317 aa)). ATP is bound by residues 165-173 (LGEGAFGKV) and lysine 189. Aspartate 286 serves as the catalytic Proton acceptor.

Belongs to the protein kinase superfamily. CMGC Ser/Thr protein kinase family. Lammer subfamily. In terms of assembly, interacts with UBL5. In terms of processing, autophosphorylates on all three types of residues. In terms of tissue distribution, expressed in the hippocampus, the cerebellum and the olfactory bulb.

Its subcellular location is the nucleus. The enzyme catalyses L-seryl-[protein] + ATP = O-phospho-L-seryl-[protein] + ADP + H(+). It catalyses the reaction L-threonyl-[protein] + ATP = O-phospho-L-threonyl-[protein] + ADP + H(+). The catalysed reaction is L-tyrosyl-[protein] + ATP = O-phospho-L-tyrosyl-[protein] + ADP + H(+). With respect to regulation, TG003 inhibits its kinase activity and affects the regulation of alternative splicing mediated by phosphorylation of SR proteins. Its function is as follows. Dual specificity kinase acting on both serine/threonine and tyrosine-containing substrates. Phosphorylates serine- and arginine-rich (SR) proteins of the spliceosomal complex and may be a constituent of a network of regulatory mechanisms that enable SR proteins to control RNA splicing. Phosphorylates SRSF1 and SRSF3. Required for the regulation of alternative splicing of MAPT/TAU. Regulates the alternative splicing of tissue factor (F3) pre-mRNA in endothelial cells. The protein is Dual specificity protein kinase CLK4 (Clk4) of Mus musculus (Mouse).